We begin with the raw amino-acid sequence, 234 residues long: Small ribosomal subunit protein uS3 (234 aa).

The 69-residue stretch at 39–107 (IRKFLKKELY…EVSINIKEVK (69 aa)) folds into the KH type-2 domain.

Belongs to the universal ribosomal protein uS3 family. In terms of assembly, part of the 30S ribosomal subunit. Forms a tight complex with proteins S10 and S14.

In terms of biological role, binds the lower part of the 30S subunit head. Binds mRNA in the 70S ribosome, positioning it for translation. This Helicobacter pylori (strain J99 / ATCC 700824) (Campylobacter pylori J99) protein is Small ribosomal subunit protein uS3.